We begin with the raw amino-acid sequence, 291 residues long: Phosphatidylglycerol--prolipoprotein diacylglyceryl transferase (291 aa).

7 consecutive transmembrane segments (helical) span residues 21–41 (VALHWYGLMYLVGFVFAMWLA), 60–80 (LLYAGFLGVFLGGRIGYVLFY), 96–116 (WDGGMSFHGGLIGVILVMIIF), 130–150 (FIAPLIPFGLGAGRLGNFING), 198–218 (SQLYELALEGVVLFIILNLFI), 225–245 (GAVSGLFLIGYGAFRIIVEFF), and 260–280 (ISMGQILSIPMIIAGAIMMVW). Residue Arg-143 coordinates a 1,2-diacyl-sn-glycero-3-phospho-(1'-sn-glycerol).

This sequence belongs to the Lgt family.

Its subcellular location is the cell inner membrane. The catalysed reaction is L-cysteinyl-[prolipoprotein] + a 1,2-diacyl-sn-glycero-3-phospho-(1'-sn-glycerol) = an S-1,2-diacyl-sn-glyceryl-L-cysteinyl-[prolipoprotein] + sn-glycerol 1-phosphate + H(+). It functions in the pathway protein modification; lipoprotein biosynthesis (diacylglyceryl transfer). In terms of biological role, catalyzes the transfer of the diacylglyceryl group from phosphatidylglycerol to the sulfhydryl group of the N-terminal cysteine of a prolipoprotein, the first step in the formation of mature lipoproteins. The polypeptide is Phosphatidylglycerol--prolipoprotein diacylglyceryl transferase (Salmonella agona (strain SL483)).